A 469-amino-acid polypeptide reads, in one-letter code: 3-isopropylmalate dehydratase large subunit (469 aa).

[4Fe-4S] cluster is bound by residues Cys350, Cys410, and Cys413.

This sequence belongs to the aconitase/IPM isomerase family. LeuC type 1 subfamily. In terms of assembly, heterodimer of LeuC and LeuD. [4Fe-4S] cluster is required as a cofactor.

It carries out the reaction (2R,3S)-3-isopropylmalate = (2S)-2-isopropylmalate. It functions in the pathway amino-acid biosynthesis; L-leucine biosynthesis; L-leucine from 3-methyl-2-oxobutanoate: step 2/4. Its function is as follows. Catalyzes the isomerization between 2-isopropylmalate and 3-isopropylmalate, via the formation of 2-isopropylmaleate. This chain is 3-isopropylmalate dehydratase large subunit, found in Rhizobium etli (strain ATCC 51251 / DSM 11541 / JCM 21823 / NBRC 15573 / CFN 42).